The sequence spans 228 residues: Transcription repressor OFP8 (228 aa).

Composition is skewed to low complexity over residues 1–14, 54–79, and 92–101; these read MSGR…FSLR, ASST…TDSS, and EEPAAAQQEQ. Disordered stretches follow at residues 1 to 21 and 36 to 143; these read MSGR…VVDI and SSSS…QLQE. Residues 107–120 show a composition bias toward basic residues; that stretch reads RRRRRQQRRRRRRA. One can recognise an OVATE domain in the interval 157–216; the sequence is VAVESAEPYEDFRESMVQMVVEKEIYAWDDLNDLLHQFLSLNSPRHHPLILHAFADLWTR.

As to quaternary structure, interacts with GSK2. In terms of processing, phosphorylated on serine and threonine residues by GSK2. Dephosphorylated during response to brassinosteroid. In terms of tissue distribution, expressed in roots, stems, stem nodes, young leaves, leaf sheaths, lamina joints, young spikelets, inflorescences, stamens and ovaries, embryos and seeds.

The protein resides in the nucleus. It is found in the cytoplasm. Its function is as follows. Probable transcriptional repressor that regulates multiple aspects of plant growth and development, partly through brassinosteroid (BR) signaling pathway. Acts downstream of the kinase GSK2, a negative regulator of BR signaling. The protein is Transcription repressor OFP8 of Oryza sativa subsp. japonica (Rice).